The following is a 226-amino-acid chain: Cytidylate kinase (226 aa).

Position 12 to 20 (12 to 20 (GPSGAGKGT)) interacts with ATP.

It belongs to the cytidylate kinase family. Type 1 subfamily.

It localises to the cytoplasm. It catalyses the reaction CMP + ATP = CDP + ADP. The catalysed reaction is dCMP + ATP = dCDP + ADP. In Vibrio parahaemolyticus serotype O3:K6 (strain RIMD 2210633), this protein is Cytidylate kinase.